A 158-amino-acid polypeptide reads, in one-letter code: Phosphopantetheine adenylyltransferase (158 aa).

Position 9 (Ser-9) interacts with substrate. ATP is bound by residues 9–10 (SF) and His-17. The substrate site is built by Lys-41, Val-73, and Lys-87. ATP-binding positions include 88 to 90 (GLR), Glu-98, and 122 to 128 (YSFVSSS).

Belongs to the bacterial CoaD family. As to quaternary structure, homohexamer. It depends on Mg(2+) as a cofactor.

The protein localises to the cytoplasm. The enzyme catalyses (R)-4'-phosphopantetheine + ATP + H(+) = 3'-dephospho-CoA + diphosphate. It participates in cofactor biosynthesis; coenzyme A biosynthesis; CoA from (R)-pantothenate: step 4/5. Its function is as follows. Reversibly transfers an adenylyl group from ATP to 4'-phosphopantetheine, yielding dephospho-CoA (dPCoA) and pyrophosphate. The protein is Phosphopantetheine adenylyltransferase of Mycobacterium sp. (strain JLS).